The chain runs to 732 residues: Prolyl 3-hydroxylase 3 (732 aa).

An N-terminal signal peptide occupies residues 1–19 (MLRLLRLLLLLLLPPPGSP). Residues 15–25 (PPGSPEPPEPP) show a composition bias toward pro residues. Residues 15–35 (PPGSPEPPEPPGLAQLSPGSP) form a disordered region. TPR repeat units follow at residues 39-72 (PDLLYADGLRAYSAGAWAPAVALLREALRSRAAL), 152-185 (REPYNYLQRAYYQLKKLDLAASAAHTFFVANPTH), 214-247 (YWAAYDTGLELLEQREAALALPQLEEALQGSLAH), and 312-345 (LSQLRRLHEAYAQVGNMSQAMENVLSVLLFYPED). Residues N327 and N458 are each glycosylated (N-linked (GlcNAc...) asparagine). In terms of domain architecture, Fe2OG dioxygenase spans 557-671 (THLVCRSAIE…RCALALWHTW (115 aa)). Fe cation contacts are provided by H580, D582, and H652. R662 is a catalytic residue. The stretch at 674 to 703 (EHSEQEWTEAKELLQEEEEEEEEEDILSRD) forms a coiled coil. The span at 676–687 (SEQEWTEAKELL) shows a compositional bias: basic and acidic residues. Residues 676-732 (SEQEWTEAKELLQEEEEEEEEEDILSRDPSPEPPSHKLQRVQEKAGKPRRVRVREEL) are disordered. The segment covering 688 to 698 (QEEEEEEEEED) has biased composition (acidic residues). Residues 722–732 (KPRRVRVREEL) show a composition bias toward basic residues. The short motif at 729-732 (REEL) is the Prevents secretion from ER element.

Belongs to the leprecan family. In terms of assembly, identified in a complex with PLOD1 and P3H4. It depends on Fe cation as a cofactor. Requires L-ascorbate as cofactor. As to expression, detected in kidney (at protein level).

Its subcellular location is the endoplasmic reticulum. It catalyses the reaction L-prolyl-[collagen] + 2-oxoglutarate + O2 = trans-3-hydroxy-L-prolyl-[collagen] + succinate + CO2. Its function is as follows. Part of a complex composed of PLOD1, P3H3 and P3H4 that catalyzes hydroxylation of lysine residues in collagen alpha chains and is required for normal assembly and cross-linkling of collagen fibrils. Required for normal hydroxylation of lysine residues in type I collagen chains in skin, bone, tendon, aorta and cornea. Required for normal skin stability via its role in hydroxylation of lysine residues in collagen alpha chains and in collagen fibril assembly. Apparently not required for normal prolyl 3-hydroxylation on collagen chains, possibly because it functions redundantly with other prolyl 3-hydroxylases. The sequence is that of Prolyl 3-hydroxylase 3 from Mus musculus (Mouse).